A 756-amino-acid chain; its full sequence is Serine/threonine-protein kinase tousled-like 1-B (756 aa).

2 stretches are compositionally biased toward low complexity: residues Met-1–Ser-12 and Ser-23–Pro-34. 2 disordered regions span residues Met-1 to Arg-56 and Val-69 to Ser-185. Over residues Glu-45–Arg-56 the composition is skewed to basic and acidic residues. Gly residues predominate over residues Asn-72–Lys-85. Over residues Ser-93 to Ser-103 the composition is skewed to low complexity. The segment covering Ser-104 to Arg-120 has biased composition (basic and acidic residues). A coiled-coil region spans residues Asp-243–Met-268. The tract at residues Lys-339–Pro-375 is disordered. Residues Ser-347–Pro-357 are compositionally biased toward low complexity. Positions Phe-397–Glu-435 form a coiled coil. One can recognise a Protein kinase domain in the interval Tyr-450–Leu-728. ATP is bound by residues Leu-456–Val-464 and Lys-479. Asp-580 (proton acceptor) is an active-site residue. The tract at residues Arg-734 to Tyr-756 is disordered. Positions Ser-735–Pro-745 are enriched in polar residues.

The protein belongs to the protein kinase superfamily. Ser/Thr protein kinase family. The cofactor is Mg(2+).

The protein resides in the nucleus. The enzyme catalyses L-seryl-[protein] + ATP = O-phospho-L-seryl-[protein] + ADP + H(+). It catalyses the reaction L-threonyl-[protein] + ATP = O-phospho-L-threonyl-[protein] + ADP + H(+). The polypeptide is Serine/threonine-protein kinase tousled-like 1-B (tlk1b) (Danio rerio (Zebrafish)).